The following is a 135-amino-acid chain: RxLR effector protein Avh5 (135 aa).

The signal sequence occupies residues 1-19; it reads MRLQFFLVMAVATLATISA. The RxLR-dEER signature appears at 43–71; it reads RFLRTADTDIVYEPKVHNPGKKQVFIEDK. Residues lysine 81, lysine 83, and lysine 84 each contribute to the a 1,2-diacyl-sn-glycero-3-phospho-(1D-myo-inositol-3-phosphate) site.

This sequence belongs to the RxLR effector family.

The protein resides in the secreted. Its subcellular location is the host cell. Functionally, effector that suppresses plant defense responses during the early stages of pathogen infection. Suppresses cell death induced by effectors and PAMPs in plant hosts. The protein is RxLR effector protein Avh5 of Phytophthora sojae (Soybean stem and root rot agent).